The chain runs to 191 residues: Putative endogenous retrovirus group K member 11-1 Env polyprotein (191 aa).

The truncated surface protein stretch occupies residues 1-191 (MPGAIDDHCP…DITLHPQGLV (191 aa)).

Belongs to the beta type-B retroviral envelope protein family. HERV class-II K(HML-8) env subfamily. As to expression, cerebellum and testis.

The protein resides in the virion. Functionally, retroviral envelope proteins mediate receptor recognition and membrane fusion during early infection. Endogenous envelope proteins may have kept, lost or modified their original function during evolution. This Homo sapiens (Human) protein is Putative endogenous retrovirus group K member 11-1 Env polyprotein (ERVK11-1).